A 198-amino-acid chain; its full sequence is Recombination protein RecR (198 aa).

The C4-type zinc finger occupies 57 to 72; sequence CSICGNLTDEDPCAIC. The Toprim domain maps to 80–175; it reads STILIVEDSR…KVTRLARGLA (96 aa).

Belongs to the RecR family.

May play a role in DNA repair. It seems to be involved in an RecBC-independent recombinational process of DNA repair. It may act with RecF and RecO. The chain is Recombination protein RecR from Streptococcus gordonii (strain Challis / ATCC 35105 / BCRC 15272 / CH1 / DL1 / V288).